We begin with the raw amino-acid sequence, 463 residues long: Type IV secretion system protein PtlD (463 aa).

Residues 1 to 24 form the signal peptide; the sequence is MAGLSRILLSCTLACLLAGQAAQA. Helical transmembrane passes span 118-138, 232-252, 253-273, 294-314, and 333-353; these read LQPL…YALL, WLLC…LAAS, LLIV…LFLV, ALVF…VLAG, and MLAA…VPLA. Over residues 376 to 410 the composition is skewed to low complexity; it reads AHRQAAARQYAPRPAAAAAAAGPHQAGTYAASATP. Residues 376–463 form a disordered region; sequence AHRQAAARQY…RVLPRKPNLP (88 aa). Pro residues predominate over residues 411 to 420; that stretch reads APAPARPAPS. Residues 441–455 show a composition bias toward basic and acidic residues; sequence VRRDDRPAPAPDRRV.

The protein resides in the cell membrane. Its function is as follows. Component of the type IV secretion system ptl required for secretion of assembled pertussis toxin (PTX) through the outer membrane. The chain is Type IV secretion system protein PtlD (ptlD) from Bordetella pertussis (strain Tohama I / ATCC BAA-589 / NCTC 13251).